The chain runs to 314 residues: Probable 5-dehydro-4-deoxyglucarate dehydratase (314 aa).

The protein belongs to the DapA family.

The catalysed reaction is 5-dehydro-4-deoxy-D-glucarate + H(+) = 2,5-dioxopentanoate + CO2 + H2O. It functions in the pathway carbohydrate acid metabolism; D-glucarate degradation; 2,5-dioxopentanoate from D-glucarate: step 2/2. This chain is Probable 5-dehydro-4-deoxyglucarate dehydratase, found in Bradyrhizobium sp. (strain ORS 278).